Reading from the N-terminus, the 424-residue chain is N-succinylarginine dihydrolase (424 aa).

Substrate contacts are provided by residues 19–28 (AGLSRGNVAS), N110, and 137–138 (HR). The active site involves E174. R206 contacts substrate. H242 is a catalytic residue. Substrate-binding residues include D244 and N351. Catalysis depends on C357, which acts as the Nucleophile.

Belongs to the succinylarginine dihydrolase family. As to quaternary structure, homodimer.

The enzyme catalyses N(2)-succinyl-L-arginine + 2 H2O + 2 H(+) = N(2)-succinyl-L-ornithine + 2 NH4(+) + CO2. The protein operates within amino-acid degradation; L-arginine degradation via AST pathway; L-glutamate and succinate from L-arginine: step 2/5. Catalyzes the hydrolysis of N(2)-succinylarginine into N(2)-succinylornithine, ammonia and CO(2). The polypeptide is N-succinylarginine dihydrolase (Zymomonas mobilis subsp. mobilis (strain ATCC 31821 / ZM4 / CP4)).